Consider the following 278-residue polypeptide: MGARLSRRRLPADPSLALDALPPELLVQVLSHVPPRSLVTRCRPVCRAWRDIVDGPTVWLLQLARDRSAEGRALYAVAQRCLPSNEDKEEFPLCALARYCLRAPFGRNLIFNSCGEQGFRGWEVEHGGNGWAIEKNLTPVPGAPSQTCFVTSFEWCSKRQLVDLVMEGVWQELLDSAQIEICVADWWGARENCGCVYQLRVRLLDVYEKEVVKFSASPDPVLQWTERGCRQVSHVFTNFGKGIRYVSFEQYGRDVSSWVGHYGALVTHSSVRVRIRLS.

Positions 15–62 (SLALDALPPELLVQVLSHVPPRSLVTRCRPVCRAWRDIVDGPTVWLLQ) constitute an F-box domain. The region spanning 99–275 (YCLRAPFGRN…VTHSSVRVRI (177 aa)) is the FBA domain.

In terms of assembly, part of a SCF (SKP1-cullin-F-box) protein ligase complex. Interacts with SKP1 and CUL1. In terms of tissue distribution, expressed in heart, skeletal muscle, liver and kidney. Expressed at lower levels in spleen and brain.

Its function is as follows. Substrate-recognition component of the SCF (SKP1-CUL1-F-box protein)-type E3 ubiquitin ligase complex. Able to recognize and bind denatured glycoproteins, which are modified with complex-type oligosaccharides. Also recognizes sulfated glycans. Does not bind high-mannose glycoproteins. The polypeptide is F-box only protein 17 (FBXO17) (Homo sapiens (Human)).